The following is a 438-amino-acid chain: Ribosomal protein uS12 methylthiotransferase RimO (438 aa).

The MTTase N-terminal domain maps to 5–116; sequence PTIAISHLGC…IVQVIQRVEN (112 aa). The [4Fe-4S] cluster site is built by Cys14, Cys50, Cys79, Cys154, Cys158, and Cys161. The Radical SAM core domain maps to 140–369; sequence TTSEGVAYLR…MQIQQPISLQ (230 aa). Residues 372–438 enclose the TRAM domain; that stretch reads CACIGDIVDV…IYDLYGEVIN (67 aa).

Belongs to the methylthiotransferase family. RimO subfamily. The cofactor is [4Fe-4S] cluster.

It is found in the cytoplasm. The catalysed reaction is L-aspartate(89)-[ribosomal protein uS12]-hydrogen + (sulfur carrier)-SH + AH2 + 2 S-adenosyl-L-methionine = 3-methylsulfanyl-L-aspartate(89)-[ribosomal protein uS12]-hydrogen + (sulfur carrier)-H + 5'-deoxyadenosine + L-methionine + A + S-adenosyl-L-homocysteine + 2 H(+). Functionally, catalyzes the methylthiolation of an aspartic acid residue of ribosomal protein uS12. This chain is Ribosomal protein uS12 methylthiotransferase RimO, found in Gloeothece citriformis (strain PCC 7424) (Cyanothece sp. (strain PCC 7424)).